We begin with the raw amino-acid sequence, 527 residues long: MGQAPSSTAESNGRELDLRLWSPVIVAGGESMAVGNVVDRDFTGDLPDECLAHVFQFLGAGDRKRCSLVCKRWLLVDGQSRHRLSLDAKDEISSFLTSMFNRFDSVTKLALRCDRKSVSLSDEALAMISVRCLNLTRVKLRGCREITDLGMEDFAKNCKNLKKLSVGSCNFGAKGVNAMLEHCKLLEELSVKRLRGIHEAAELIHLPDDASSSSLRSICLKELVNGQVFEPLLATTRTLKTLKIIRCLGDWDKVLQMIANGKSSLSEIHLERLQVSDIGLSAISKCSNVETLHIVKTPECSNFGLIYVAERCKLLRKLHIDGWRTNRIGDEGLLSVAKHCLNLQELVLIGVNATHMSLAAIASNCEKLERLALCGSGTIGDTEIACIARKCGALRKFCIKGCPVSDRGIEALAVGCPNLVKLKVKKCKVVTGEIGDWLREQRRTLVVSMDGDETEAVVVVDGEVETVVEEPRVAQAGGIVAEIGSSNGGGGSRLAMIRSKLGFLAGRNLVTCTFRRWSHNDNASSST.

In terms of domain architecture, F-box spans 39–85 (DRDFTGDLPDECLAHVFQFLGAGDRKRCSLVCKRWLLVDGQSRHRLS).

As to quaternary structure, part of a SCF (ASK-cullin-F-box) protein ligase complex. Interacts with SKP1A/ASK1, SKP1B/ASK2 and ASK11.

It is found in the nucleus. Its pathway is protein modification; protein ubiquitination. Functionally, component of SCF(ASK-cullin-F-box) E3 ubiquitin ligase complexes, which may mediate the ubiquitination and subsequent proteasomal degradation of target proteins. This chain is F-box protein SKIP2 (SKIP2), found in Arabidopsis thaliana (Mouse-ear cress).